The sequence spans 290 residues: Pyridoxal kinase PdxY (290 aa).

S14 provides a ligand contact to substrate. Residues D116 and E153 each coordinate ATP. Substrate is bound at residue D226.

It belongs to the pyridoxine kinase family. PdxY subfamily. In terms of assembly, homodimer. The cofactor is Mg(2+).

It catalyses the reaction pyridoxal + ATP = pyridoxal 5'-phosphate + ADP + H(+). It functions in the pathway cofactor metabolism; pyridoxal 5'-phosphate salvage; pyridoxal 5'-phosphate from pyridoxal: step 1/1. Pyridoxal kinase involved in the salvage pathway of pyridoxal 5'-phosphate (PLP). Catalyzes the phosphorylation of pyridoxal to PLP. In Rubrobacter xylanophilus (strain DSM 9941 / JCM 11954 / NBRC 16129 / PRD-1), this protein is Pyridoxal kinase PdxY.